Here is a 173-residue protein sequence, read N- to C-terminus: NEDD4-binding protein 2-like 1 (173 aa).

Residues 1–35 (MEESFLESFGRLSLRQQQPPPPRPPAPPPLRGTPP) are disordered. Residues 18-32 (QPPPPRPPAPPPLRG) show a composition bias toward pro residues.

As to quaternary structure, interacts with dynactin subunit proteins, including DCTN4, DCTN5 and DCTN5.

Functionally, might play a role in adipocyte differentiation and triglyceride accumulation. This Bos taurus (Bovine) protein is NEDD4-binding protein 2-like 1 (N4BP2L1).